Here is a 401-residue protein sequence, read N- to C-terminus: Formate dehydrogenase (401 aa).

Residues Ile-123 and Asn-147 each coordinate substrate. Residues Ser-148, 202 to 203, Asp-222, 257 to 261, Thr-283, Asp-309, 333 to 336, and Ser-381 each bind NAD(+); these read RI, PLHPE, and HISG.

It belongs to the D-isomer specific 2-hydroxyacid dehydrogenase family. FDH subfamily. As to quaternary structure, homodimer.

Its subcellular location is the cytoplasm. The enzyme catalyses formate + NAD(+) = CO2 + NADH. Catalyzes the NAD(+)-dependent oxidation of formate to carbon dioxide. Formate oxidation is the final step in the methanol oxidation pathway in methylotrophic microorganisms. Has a role in the detoxification of exogenous formate in non-methylotrophic organisms. This is Formate dehydrogenase from Pseudomonas sp. (strain 101) (Achromobacter parvulus T1).